We begin with the raw amino-acid sequence, 91 residues long: Small ribosomal subunit protein bS16 (91 aa).

Belongs to the bacterial ribosomal protein bS16 family.

This chain is Small ribosomal subunit protein bS16, found in Staphylococcus haemolyticus (strain JCSC1435).